We begin with the raw amino-acid sequence, 262 residues long: 14-3-3 protein homolog (262 aa).

Belongs to the 14-3-3 family.

This is 14-3-3 protein homolog from Trichoderma harzianum (Hypocrea lixii).